Consider the following 571-residue polypeptide: Cationic amino acid transporter 8 (571 aa).

N35 carries an N-linked (GlcNAc...) asparagine glycan. Transmembrane regions (helical) follow at residues 39–59 (FWLL…YFDW), 94–114 (SLYP…GFLY), 117–137 (IGPK…WVFL), 148–168 (FLSF…ILTI), 177–197 (TFIL…PATL), and 217–237 (IFLI…LMPF). N298, N325, and N346 each carry an N-linked (GlcNAc...) asparagine glycan. Residues 365-385 (LFFKVLLSYPSICIIVYFILF) form a helical membrane-spanning segment. A glycan (N-linked (GlcNAc...) asparagine) is linked at N386. The next 5 membrane-spanning stretches (helical) occupy residues 405 to 425 (SIIN…IIFG), 433 to 453 (SAII…TALI), 461 to 481 (VSAF…YCFI), 488 to 508 (VVFG…SLLC), and 528 to 548 (VVLL…VLYF).

The protein belongs to the SLC43A transporter (TC 2.A.1.44) family.

Its subcellular location is the membrane. It carries out the reaction L-arginine(in) = L-arginine(out). Functionally, sodium-independent cationic amino acid transporter. Transports L-arginine, L-lysine, L-histidine and L-ornithine. This Plasmodium vivax (strain Salvador I) protein is Cationic amino acid transporter 8.